We begin with the raw amino-acid sequence, 79 residues long: uncharacterized protein (79 aa).

This is an uncharacterized protein from Haemophilus influenzae (strain ATCC 51907 / DSM 11121 / KW20 / Rd).